Consider the following 272-residue polypeptide: Putative B3 domain-containing protein Os02g0455900 (272 aa).

The segment at residues 30–134 (GKVLMPSDVS…RFFICCRCTC (105 aa)) is a DNA-binding region (TF-B3). The tract at residues 189 to 227 (TASLGCAAAQPPQVPPTPTPRRRRRSMMVHPEPPEHTTD) is disordered.

It localises to the nucleus. In Oryza sativa subsp. japonica (Rice), this protein is Putative B3 domain-containing protein Os02g0455900.